The following is a 428-amino-acid chain: Enolase 1 (428 aa).

(2R)-2-phosphoglycerate is bound at residue Q167. The active-site Proton donor is the E209. Residues D246, E288, and D315 each coordinate Mg(2+). Residues K340, R369, S370, and K391 each coordinate (2R)-2-phosphoglycerate. The active-site Proton acceptor is K340.

Belongs to the enolase family. As to quaternary structure, component of the RNA degradosome, a multiprotein complex involved in RNA processing and mRNA degradation. Mg(2+) serves as cofactor.

Its subcellular location is the cytoplasm. The protein localises to the secreted. It is found in the cell surface. It catalyses the reaction (2R)-2-phosphoglycerate = phosphoenolpyruvate + H2O. It participates in carbohydrate degradation; glycolysis; pyruvate from D-glyceraldehyde 3-phosphate: step 4/5. Functionally, catalyzes the reversible conversion of 2-phosphoglycerate (2-PG) into phosphoenolpyruvate (PEP). It is essential for the degradation of carbohydrates via glycolysis. The protein is Enolase 1 of Pseudomonas syringae pv. syringae (strain B728a).